The sequence spans 434 residues: Enolase (434 aa).

(2R)-2-phosphoglycerate is bound at residue Gln-163. The Proton donor role is filled by Glu-205. Mg(2+) is bound by residues Asp-242, Glu-291, and Asp-318. Residues Lys-343, Arg-372, Ser-373, and Lys-394 each contribute to the (2R)-2-phosphoglycerate site. The active-site Proton acceptor is Lys-343.

Belongs to the enolase family. Mg(2+) is required as a cofactor.

The protein localises to the cytoplasm. The protein resides in the secreted. It is found in the cell surface. The enzyme catalyses (2R)-2-phosphoglycerate = phosphoenolpyruvate + H2O. The protein operates within carbohydrate degradation; glycolysis; pyruvate from D-glyceraldehyde 3-phosphate: step 4/5. In terms of biological role, catalyzes the reversible conversion of 2-phosphoglycerate (2-PG) into phosphoenolpyruvate (PEP). It is essential for the degradation of carbohydrates via glycolysis. This chain is Enolase, found in Streptococcus pneumoniae serotype 19F (strain G54).